The sequence spans 158 residues: SsrA-binding protein (158 aa).

This sequence belongs to the SmpB family.

The protein localises to the cytoplasm. Its function is as follows. Required for rescue of stalled ribosomes mediated by trans-translation. Binds to transfer-messenger RNA (tmRNA), required for stable association of tmRNA with ribosomes. tmRNA and SmpB together mimic tRNA shape, replacing the anticodon stem-loop with SmpB. tmRNA is encoded by the ssrA gene; the 2 termini fold to resemble tRNA(Ala) and it encodes a 'tag peptide', a short internal open reading frame. During trans-translation Ala-aminoacylated tmRNA acts like a tRNA, entering the A-site of stalled ribosomes, displacing the stalled mRNA. The ribosome then switches to translate the ORF on the tmRNA; the nascent peptide is terminated with the 'tag peptide' encoded by the tmRNA and targeted for degradation. The ribosome is freed to recommence translation, which seems to be the essential function of trans-translation. The sequence is that of SsrA-binding protein from Saccharopolyspora erythraea (strain ATCC 11635 / DSM 40517 / JCM 4748 / NBRC 13426 / NCIMB 8594 / NRRL 2338).